Reading from the N-terminus, the 1984-residue chain is Sodium channel protein type 9 subunit alpha (1984 aa).

The Cytoplasmic portion of the chain corresponds to 1–125 (MAMLPPPGPQ…RRISIKILVH (125 aa)). Over residues 26 to 39 (RISEEKAKGHKDEK) the composition is skewed to basic and acidic residues. A disordered region spans residues 26-55 (RISEEKAKGHKDEKKDDEEEGPKPSSDLEA). The I repeat unit spans residues 112–410 (FSPLRRISIK…VAMAYEEQNQ (299 aa)). Residues 126–145 (SLFSMLIMCTILTNCIFMTM) traverse the membrane as a helical segment. The Extracellular segment spans residues 146 to 150 (SNPPD). Residues 151–172 (WTKNVEYTFTGIYTFESLIKIL) traverse the membrane as a helical segment. At 173 to 185 (ARGFCVGEFTFLR) the chain is on the cytoplasmic side. Residues 186-204 (DPWNWLDFVVIVFAYLTEF) traverse the membrane as a helical segment. Residues 205–210 (VNLGNV) lie on the Extracellular side of the membrane. Residues 211–227 (SALRTFRVLRALKTISV) form a helical membrane-spanning segment. Residues 228-241 (IPGLKTIVGALIQS) are Cytoplasmic-facing. A helical membrane pass occupies residues 242-267 (VKKLSDVMILTVFCLSVFALIGLQLF). Topologically, residues 268–346 (MGNLKHKCFR…PDYGYTSFDT (79 aa)) are extracellular. The cysteines at positions 275 and 324 are disulfide-linked. The segment at residues 347 to 363 (FGWAFLALFRLMTQDYW) is an intramembrane region (pore-forming). The Extracellular segment spans residues 364 to 376 (ENLYQQTLRAAGK). A helical transmembrane segment spans residues 377 to 402 (TYMIFFVVVIFLGSFYLINLILAVVA). Positions 402 to 449 (AMAYEEQNQANIEEAKQKELEFQQMLDRLKKEQEEAEAIAAAAAEYTS) form a coiled coil. The Cytoplasmic portion of the chain corresponds to 403 to 744 (MAYEEQNQAN…FIYFIVMDPF (342 aa)). Residues 458-471 (LSESSSETSRLSSK) are compositionally biased toward low complexity. 2 disordered regions span residues 458 to 540 (LSES…SIRG) and 574 to 609 (HSIF…RSPP). The span at 474 to 486 (KERRNRRKKKKQK) shows a compositional bias: basic residues. Basic and acidic residues-rich tracts occupy residues 489–509 (SGEE…ESIR) and 574–584 (HSIFGDNESRR). Residues 684 to 708 (LRQRAMSRASILTNTVEELEESRQK) adopt a coiled-coil conformation. The II repeat unit spans residues 725–988 (CSPYWIKFKK…EEDTDANNLQ (264 aa)). Residues 745–761 (VDLAITICIVLNTLFMA) form a helical membrane-spanning segment. Residues 762–770 (MEHHPMTDE) are Extracellular-facing. The chain crosses the membrane as a helical span at residues 771–795 (FKNVLAVGNLVFTGIFAAEMVLKLI). The Cytoplasmic segment spans residues 796-804 (AMDPYEYFQ). A helical membrane pass occupies residues 805–821 (VGWNIFDSLIVTLSLVE). At 822 to 830 (LFLADVEGL) the chain is on the extracellular side. A helical transmembrane segment spans residues 831 to 847 (SVLRSFRLLRVFKLAKS). The Cytoplasmic portion of the chain corresponds to 848 to 864 (WPTLNMLIKIIGNSVGA). Residues 865-887 (LGNLTLVLAIIVFIFAVVGMQLF) traverse the membrane as a helical segment. Residues 888–914 (GKSYKECVCKINENCKLPRWHMNDFFH) are Extracellular-facing. A disulfide bridge links Cys-896 with Cys-902. An intramembrane region (pore-forming) is located at residues 915-927 (SFLIVFRVLCGEW). The Extracellular segment spans residues 928 to 939 (IETMWDCMEVAG). The cysteines at positions 934 and 943 are disulfide-linked. The chain crosses the membrane as a helical span at residues 940 to 966 (QTMCLIVYMMVMVIGNLVVLNLFLALL). At 967–1185 (LSSFSSDNLT…WWTIRKTCYR (219 aa)) the chain is on the cytoplasmic side. Disordered stretches follow at residues 1015–1039 (KKPK…YISN) and 1089–1145 (PIAP…EPIN). The span at 1019-1035 (GSKDTKRTADPNNKREN) shows a compositional bias: basic and acidic residues. Acidic residues predominate over residues 1135-1145 (GEEEAEAEPIN). The stretch at 1178–1486 (TIRKTCYRIV…KKYYNAMKKL (309 aa)) is one III repeat. The chain crosses the membrane as a helical span at residues 1186 to 1210 (IVEHSWFESFIVLMILLSSGALAFE). Over 1211 to 1222 (DIYIEKKKTIKI) the chain is Extracellular. The helical transmembrane segment at 1223–1248 (ILEYADKIFTYIFILEMLLKWVAYGY) threads the bilayer. The Cytoplasmic portion of the chain corresponds to 1249-1250 (KT). A helical membrane pass occupies residues 1251-1276 (YFTNAWCWLDFLIVDVSLVTLVANTL). The Extracellular segment spans residues 1277–1285 (GYSDLGPIK). The chain crosses the membrane as a helical span at residues 1286-1302 (SLRTLRALRPLRALSRF). At 1303-1315 (EGMRVVVNALIGA) the chain is on the cytoplasmic side. A helical transmembrane segment spans residues 1316-1340 (IPSIMNVLLVCLIFWLIFSIMGVNL). Residues 1341 to 1392 (FAGKFYECVNTTDGSRFSVSQVANRSECFALMNVSGNVRWKNLKVNFDNVGL) are Extracellular-facing. An intrachain disulfide couples Cys-1348 to Cys-1368. The pore-forming intramembrane region spans 1393-1403 (GYLSLLQVATF). At 1404 to 1429 (KGWMDIMYAAVDSVNVNAQPIYEYNL) the chain is on the extracellular side. Residues 1430-1455 (YMYIYFVIFIIFGSFFTLNLFIGVII) form a helical membrane-spanning segment. Residues 1456 to 1512 (DNFNQQKKKLGGQDIFMTEEQKKYYNAMKKLGSKKPQKPIPRPGNKFQGCIFDLVTN) are Cytoplasmic-facing. Ser-1488 carries the phosphoserine; by PKC modification. The IV repeat unit spans residues 1495 to 1793 (IPRPGNKFQG…WEKFDPDATQ (299 aa)). Residues 1513–1532 (QAFDITIMVLICLNMVTMMV) traverse the membrane as a helical segment. Residues 1533-1543 (EKEGQTDYMSF) lie on the Extracellular side of the membrane. A helical membrane pass occupies residues 1544–1565 (VLYWINVVFIILFTGECVLKLI). The Cytoplasmic segment spans residues 1566–1574 (SLRHYYFTV). The chain crosses the membrane as a helical span at residues 1575-1596 (GWNIFDFVVVILSIVGMFLAEM). At 1597–1605 (IEKYFVSPT) the chain is on the extracellular side. A helical membrane pass occupies residues 1606–1625 (LFRVIRLARIGRILRLIKGA). At 1626–1638 (KGIRTLLFALMMS) the chain is on the cytoplasmic side. Residues 1639–1661 (LPALFNIGLLLFLVMFIYAIFGM) traverse the membrane as a helical segment. Residues 1662 to 1684 (SNFAYVKKEAGINDMFNFETFGN) lie on the Extracellular side of the membrane. Residues 1685 to 1697 (SMICLFQITTSAG) constitute an intramembrane region (pore-forming). Residues 1698-1731 (WDGLLAPILNSAPPDCDPKKVHPGSSVEGDCGNP) lie on the Extracellular side of the membrane. Cysteines 1713 and 1728 form a disulfide. A helical membrane pass occupies residues 1732–1757 (SVGIFYFVSYIIISFLVVVNMYIAVI). Over 1758–1984 (LENFSVATEE…EDKEKDESRK (227 aa)) the chain is Cytoplasmic. Positions 1887 to 1916 (EDVSATIIQRAYRRYRLRQNVKNISSIYIK) constitute an IQ domain. Residues 1933-1984 (DNVNENSSPEKTDATASTISPPSYDSVTKPDQEKYETDKTEKEDKEKDESRK) are disordered. Over residues 1946 to 1958 (ATASTISPPSYDS) the composition is skewed to polar residues. Positions 1960-1984 (TKPDQEKYETDKTEKEDKEKDESRK) are enriched in basic and acidic residues.

The protein belongs to the sodium channel (TC 1.A.1.10) family. Nav1.7/SCN9A subfamily. As to quaternary structure, the Nav1.7 voltage-gated sodium channel consists of an ion-conducting alpha subunit SCN9A which is functional on its own regulated by one or more beta-1 (SCN1B), beta-2 (SCN2B), beta-3 (SCN3B) and beta-4 (SCN4B) subunits. SCN1B and SCN3B are non-covalently associated with SCN9A. SCN2B and SCN4B are disulfide-linked to SCN9A. SCN1B regulates channel inactivation. Interacts with NEDD4 and NEDD4L; regulates Nav1.7 activity most probably through ubiquitination and subsequent endocytosis. Interacts with TMEM233; modulates the gating properties of NaV1.7. In terms of processing, ubiquitinated by NEDD4L; which may promote its endocytosis. Post-translationally, phosphorylation at Ser-1488 by PKC in a highly conserved cytoplasmic loop increases peak sodium currents. In terms of tissue distribution, expressed strongly in sciatic nerves, with moderate levels in kidney. Not detected in liver, brain and muscle.

The protein resides in the cell membrane. Its subcellular location is the cell projection. The protein localises to the neuron projection. It localises to the axon. It carries out the reaction Na(+)(in) = Na(+)(out). In terms of biological role, pore-forming subunit of Nav1.7, a voltage-gated sodium (Nav) channel that directly mediates the depolarizing phase of action potentials in excitable membranes. Navs, also called VGSCs (voltage-gated sodium channels) or VDSCs (voltage-dependent sodium channels), operate by switching between closed and open conformations depending on the voltage difference across the membrane. In the open conformation they allow Na(+) ions to selectively pass through the pore, along their electrochemical gradient. The influx of Na(+) ions provokes membrane depolarization, initiating the propagation of electrical signals throughout cells and tissues. Nav1.7 plays a crucial role in controlling the excitability and action potential propagation from nociceptor neurons, thereby contributing to the sensory perception of pain. In Mus musculus (Mouse), this protein is Sodium channel protein type 9 subunit alpha.